The following is a 1531-amino-acid chain: MALRGFCSADGSDPLWDWNVTWYTSNPDFTKCFQNTVLVWVPCFYLWACFPFYFLYLSRHDRGYIQMTLLNKTKTALGFLLWIVCWADLFYSFWERSRGIFLAPVFLVSPTLLGITMLLATFLIQLERRKGVQSSGIMLTFWLVALLCALAILRSKIMTALKEDVQVDLFRDMTFYVYFSLVLIQLVLSCFSDRSPLFSETIHDPNPCPESSASFLSRITFWWITGLIVRGYRQPLEGSDLWSLNKEDTSEQVVPVLVKNWKKECAKTRKQPVKVVYSSKDPAQPKDSSKVDANEEVEALIVKSPQKEWNPSLFKVLYKTFGPYFLMSFFFKAIHDLMMFSGPEILKLLINFVNDTKAPDWQGYFYTALLFVAACLQTLVLHQYFHICFVSGMRIKTAVIGAVYRKALVITNAARKSSTVGEIVNLMSVDAQRFMDLATYINMIWSAPLQVILALYLLWRNLGPPILAGVAVMVLMVPVNAVMAMKTKTYQVAHMKSKDNRIKLMNEILNGIKVLKLYAWELAFKDKVLAIRQEELKVLKKSAYLAAVGTFTWVCTPFLVALCTFAVYVTIDKNNVLDAQKAFVSLALFNILRFPLNILPMVISSIVQASVSLKRLRIFLSHEELEPDSIERRPVKDGGDTNSITVRNATFTWARSDPPTLNGITFSIPEGALVAVVGQVGCGKSSLLSALLAEMDKVEGHVALKGSVAYVPQQAWIQNDSLQENILFGCQLEEPYYRSVIQACALLPDLEILPSGDRTEIGEKGVNLSGGQKQRVSLARAVYCNADIYLFDDPLSAVDAHVGKHIFENVIGPKGMLKNKTRILVTHSMSYLPQVDVIIVMSGGKISEMGSYQELLARDGAFAEFLRTYASAEQEQDPEDNGVTGVSGPGKEAKQMENGMLVTDSAGKQLQRQLSSSSSYSGDVSRQHNSTAELQKDGAKKEETWKLMEADKAQTGQVKLSVYWDYMKAIGLFISFLSIFLFICNHVAALASNYWLSLWTDDPIVNGTQEHTKVRLSVYGALGISQGIAVFGYSMAVSIGGILASRCLHVDLLHSILRSPMSFFERTPSGNLVNRFSKELDTVDSMIPEVIKMFMGSLFNVIGACIVILLATPIAAIIIPPLGLIYFFVQRFYVASSRQLKRLESVSRSPVYSHFNETLLGVSVIRAFEEQERFIHQSDLKVDENQKAYYPSIVANRWLAVRLECVGNCIVLFAALFAVISRHSLSAGLVGLSVSYSLQVTTYLNWLVRMSSEMETNIVAVERLKEYSETEKEAPWQIQETAPPSNWPQVGRVEFRNYCLRYREDLDFVLRHINVTINGGEKVGIVGRTGAGKSSLTLGLFRINESAEGEIIIDGINIARIGLHDLRFKITIIPQDPVLFSGSLRMNLDPFSQYSDEEVWTSLELAHLKGFVSALPDKLDHECAEGGENLSVGQRQLVCLARALLRKTKILVLDEATAAVDLETDDLIQSTIRTQFEDCTVLTIAHRLNTIMDYTRVIVLDKGEIQEYGAPSDLLQQRGLFYNMARDAGLV.

At 1-33 (MALRGFCSADGSDPLWDWNVTWYTSNPDFTKCF) the chain is on the extracellular side. Asn19 carries N-linked (GlcNAc...) asparagine glycosylation. The helical transmembrane segment at 34–54 (QNTVLVWVPCFYLWACFPFYF) threads the bilayer. Topologically, residues 55–74 (LYLSRHDRGYIQMTLLNKTK) are cytoplasmic. A helical membrane pass occupies residues 75–95 (TALGFLLWIVCWADLFYSFWE). The Extracellular portion of the chain corresponds to 96-100 (RSRGI). The chain crosses the membrane as a helical span at residues 101 to 121 (FLAPVFLVSPTLLGITMLLAT). Over 122–133 (FLIQLERRKGVQ) the chain is Cytoplasmic. The helical transmembrane segment at 134–154 (SSGIMLTFWLVALLCALAILR) threads the bilayer. The Extracellular segment spans residues 155–172 (SKIMTALKEDVQVDLFRD). A helical transmembrane segment spans residues 173–193 (MTFYVYFSLVLIQLVLSCFSD). Residues 194 to 316 (RSPLFSETIH…KEWNPSLFKV (123 aa)) lie on the Cytoplasmic side of the membrane. Position 277 is a phosphotyrosine (Tyr277). At Ser289 the chain carries Phosphoserine. A helical membrane pass occupies residues 317–337 (LYKTFGPYFLMSFFFKAIHDL). One can recognise an ABC transmembrane type-1 1 domain in the interval 325-608 (FLMSFFFKAI…LPMVISSIVQ (284 aa)). Over 338–363 (MMFSGPEILKLLINFVNDTKAPDWQG) the chain is Extracellular. The chain crosses the membrane as a helical span at residues 364 to 384 (YFYTALLFVAACLQTLVLHQY). At 385–440 (FHICFVSGMRIKTAVIGAVYRKALVITNAARKSSTVGEIVNLMSVDAQRFMDLATY) the chain is on the cytoplasmic side. The chain crosses the membrane as a helical span at residues 441–461 (INMIWSAPLQVILALYLLWRN). Residues 462 to 464 (LGP) lie on the Extracellular side of the membrane. A helical membrane pass occupies residues 465–485 (PILAGVAVMVLMVPVNAVMAM). The Cytoplasmic segment spans residues 486 to 547 (KTKTYQVAHM…VLKKSAYLAA (62 aa)). Lys503 is subject to N6-succinyllysine. Residues 548–568 (VGTFTWVCTPFLVALCTFAVY) traverse the membrane as a helical segment. Residues 569 to 590 (VTIDKNNVLDAQKAFVSLALFN) lie on the Extracellular side of the membrane. Residues 591 to 611 (ILRFPLNILPMVISSIVQASV) traverse the membrane as a helical segment. Residues 612-967 (SLKRLRIFLS…VKLSVYWDYM (356 aa)) lie on the Cytoplasmic side of the membrane. Positions 644–868 (ITVRNATFTW…DGAFAEFLRT (225 aa)) constitute an ABC transporter 1 domain. Residue 678 to 685 (GQVGCGKS) participates in ATP binding. The interval 871 to 893 (SAEQEQDPEDNGVTGVSGPGKEA) is disordered. Residues Ser905, Ser915, and Ser930 each carry the phosphoserine modification. The segment at 917 to 938 (SSSYSGDVSRQHNSTAELQKDG) is disordered. Positions 922–933 (GDVSRQHNSTAE) are enriched in polar residues. Residues 968-988 (KAIGLFISFLSIFLFICNHVA) traverse the membrane as a helical segment. Positions 975–1256 (SFLSIFLFIC…LVRMSSEMET (282 aa)) constitute an ABC transmembrane type-1 2 domain. The Extracellular portion of the chain corresponds to 989-1025 (ALASNYWLSLWTDDPIVNGTQEHTKVRLSVYGALGIS). N-linked (GlcNAc...) asparagine glycosylation occurs at Asn1006. A helical membrane pass occupies residues 1026–1046 (QGIAVFGYSMAVSIGGILASR). Over 1047–1089 (CLHVDLLHSILRSPMSFFERTPSGNLVNRFSKELDTVDSMIPE) the chain is Cytoplasmic. A helical transmembrane segment spans residues 1090–1110 (VIKMFMGSLFNVIGACIVILL). Position 1111 (Ala1111) is a topological domain, extracellular. The helical transmembrane segment at 1112 to 1132 (TPIAAIIIPPLGLIYFFVQRF) threads the bilayer. The Cytoplasmic segment spans residues 1133–1203 (YVASSRQLKR…VANRWLAVRL (71 aa)). The chain crosses the membrane as a helical span at residues 1204–1224 (ECVGNCIVLFAALFAVISRHS). The Extracellular segment spans residues 1225–1226 (LS). The helical transmembrane segment at 1227–1247 (AGLVGLSVSYSLQVTTYLNWL) threads the bilayer. At 1248 to 1531 (VRMSSEMETN…YNMARDAGLV (284 aa)) the chain is on the cytoplasmic side. The 235-residue stretch at 1293 to 1527 (VEFRNYCLRY…RGLFYNMARD (235 aa)) folds into the ABC transporter 2 domain. 1327-1334 (GRTGAGKS) serves as a coordination point for ATP.

This sequence belongs to the ABC transporter superfamily. ABCC family. Conjugate transporter (TC 3.A.1.208) subfamily.

It localises to the cell membrane. The protein localises to the basolateral cell membrane. The catalysed reaction is ATP + H2O + xenobioticSide 1 = ADP + phosphate + xenobioticSide 2.. It catalyses the reaction an S-substituted glutathione(in) + ATP + H2O = an S-substituted glutathione(out) + ADP + phosphate + H(+). It carries out the reaction sphing-4-enine 1-phosphate(in) + ATP + H2O = sphing-4-enine 1-phosphate(out) + ADP + phosphate + H(+). The enzyme catalyses leukotriene C4(in) + ATP + H2O = leukotriene C4(out) + ADP + phosphate + H(+). The catalysed reaction is 17beta-estradiol 17-O-(beta-D-glucuronate)(in) + ATP + H2O = 17beta-estradiol 17-O-(beta-D-glucuronate)(out) + ADP + phosphate + H(+). It catalyses the reaction daunorubicin(in) + ATP + H2O = daunorubicin(out) + ADP + phosphate + H(+). It carries out the reaction vincristine(in) + ATP + H2O = vincristine(out) + ADP + phosphate + H(+). The enzyme catalyses 2',3'-cGAMP(in) + ATP + H2O = 2',3'-cGAMP(out) + ADP + phosphate + H(+). The catalysed reaction is S-[(2E,6E,10E)-geranylgeranyl]-L-glutathione(in) + ATP + H2O = S-[(2E,6E,10E)-geranylgeranyl]-L-glutathione(out) + ADP + phosphate + H(+). It catalyses the reaction prostaglandin A2-S-(R)-glutathione(in) + ATP + H2O = prostaglandin A2-S-(R)-glutathione(out) + ADP + phosphate + H(+). It carries out the reaction prostaglandin A2-S-(S)-glutathione(in) + ATP + H2O = prostaglandin A2-S-(S)-glutathione(out) + ADP + phosphate + H(+). With respect to regulation, MK 571 inhibits sphingosine 1-phosphate and leukotriene C4 export. Mediates export of organic anions and drugs from the cytoplasm. Mediates ATP-dependent transport of glutathione and glutathione conjugates, leukotriene C4, estradiol-17-beta-o-glucuronide, methotrexate, antiviral drugs and other xenobiotics. Confers resistance to anticancer drugs by decreasing accumulation of drug in cells, and by mediating ATP- and GSH-dependent drug export. Hydrolyzes ATP with low efficiency. Catalyzes the export of sphingosine 1-phosphate from mast cells independently of their degranulation. Participates in inflammatory response by allowing export of leukotriene C4 from leukotriene C4-synthesizing cells. Mediates ATP-dependent, GSH-independent cyclic GMP-AMP (cGAMP) export. Thus, by limiting intracellular cGAMP concentrations negatively regulates the cGAS-STING pathway. Exports S-geranylgeranyl-glutathione (GGG) in lymphoid cells and stromal compartments of lymphoid organs. ABCC1 (via extracellular transport) with GGT5 (via GGG catabolism) establish GGG gradients within lymphoid tissues to position P2RY8-positive lymphocytes at germinal centers in lymphoid follicles and restrict their chemotactic transmigration from blood vessels to the bone marrow parenchyma. Mediates basolateral export of GSH-conjugated R- and S-prostaglandin A2 diastereomers in polarized epithelial cells. The sequence is that of Multidrug resistance-associated protein 1 from Macaca fascicularis (Crab-eating macaque).